Here is a 349-residue protein sequence, read N- to C-terminus: Galanin receptor type 1 (349 aa).

Residues 1-36 lie on the Extracellular side of the membrane; the sequence is MELAVGNLSEGNASWPEPPAPEPGPLFGIGVENFVT. N-linked (GlcNAc...) asparagine glycans are attached at residues Asn7 and Asn12. A helical transmembrane segment spans residues 37–57; it reads LVVFGLIFALGVLGNSLVITV. The Cytoplasmic portion of the chain corresponds to 58 to 70; it reads LARSKPGKPRSTT. A helical transmembrane segment spans residues 71 to 91; it reads NLFILNLSIADLAYLLFCIPF. The Extracellular portion of the chain corresponds to 92-109; sequence QATVYALPTWVLGAFICK. Cys108 and Cys187 are oxidised to a cystine. Residues 110–131 form a helical membrane-spanning segment; sequence FIHYFFTVSMLVSIFTLAAMSV. Residues 132 to 151 lie on the Cytoplasmic side of the membrane; that stretch reads DRYVAIVHSRRSSSLRVSRN. A helical transmembrane segment spans residues 152–172; that stretch reads ALLGVGCIWALSIAMASPVAY. At 173–200 the chain is on the extracellular side; it reads HQGLFHPRASNQTFCWEQWPDPRHKKAY. Asn183 is a glycosylation site (N-linked (GlcNAc...) asparagine). A helical transmembrane segment spans residues 201-221; the sequence is VVCTFVFGYLLPLLLICFCYA. Topologically, residues 222–248 are cytoplasmic; it reads KVLNHLHKKLKNMSKKSEASKKKTAQT. Residues 249–269 form a helical membrane-spanning segment; the sequence is VLVVVVVFGISWLPHHIIHLW. Topologically, residues 270 to 271 are extracellular; it reads AE. A helical membrane pass occupies residues 272–292; sequence FGVFPLTPASFLFRITAHCLA. Over 293 to 349 the chain is Cytoplasmic; that stretch reads YSNSSVNPIIYAFLSENFRKAYKQVFKCHIRKDSHLSDTKESKSRIDTPPSTNCTHV. A lipid anchor (S-palmitoyl cysteine) is attached at Cys320.

Belongs to the G-protein coupled receptor 1 family. As to quaternary structure, interacts with GRP39 AND HTR1A. Palmitoylated on at least one of the three cysteine residues present in the C-terminal part.

It is found in the cell membrane. In terms of biological role, receptor for the hormone galanin. The activity of this receptor is mediated by G proteins that inhibit adenylate cyclase activity. This Homo sapiens (Human) protein is Galanin receptor type 1 (GALR1).